A 275-amino-acid polypeptide reads, in one-letter code: Formamidopyrimidine-DNA glycosylase (275 aa).

Pro-2 serves as the catalytic Schiff-base intermediate with DNA. Residue Glu-3 is the Proton donor of the active site. The active-site Proton donor; for beta-elimination activity is Lys-58. DNA-binding residues include His-89, Arg-108, and Lys-151. The FPG-type; degenerate zinc finger occupies 236-275; sequence KVYDRAGQPCERCPGPAACAGISRTVQSGRATYFCARTQK. The Proton donor; for delta-elimination activity role is filled by Arg-265.

Belongs to the FPG family. In terms of assembly, monomer. It depends on Zn(2+) as a cofactor.

It carries out the reaction Hydrolysis of DNA containing ring-opened 7-methylguanine residues, releasing 2,6-diamino-4-hydroxy-5-(N-methyl)formamidopyrimidine.. The enzyme catalyses 2'-deoxyribonucleotide-(2'-deoxyribose 5'-phosphate)-2'-deoxyribonucleotide-DNA = a 3'-end 2'-deoxyribonucleotide-(2,3-dehydro-2,3-deoxyribose 5'-phosphate)-DNA + a 5'-end 5'-phospho-2'-deoxyribonucleoside-DNA + H(+). In terms of biological role, involved in base excision repair of DNA damaged by oxidation or by mutagenic agents. Acts as a DNA glycosylase that recognizes and removes damaged bases. Has a preference for oxidized purines, such as 7,8-dihydro-8-oxoguanine (8-oxoG). Has AP (apurinic/apyrimidinic) lyase activity and introduces nicks in the DNA strand. Cleaves the DNA backbone by beta-delta elimination to generate a single-strand break at the site of the removed base with both 3'- and 5'-phosphates. The polypeptide is Formamidopyrimidine-DNA glycosylase (Acidiphilium cryptum (strain JF-5)).